We begin with the raw amino-acid sequence, 160 residues long: Ribosomal RNA large subunit methyltransferase H (160 aa).

S-adenosyl-L-methionine-binding positions include Leu-76, Gly-108, and 127–132; that span reads FGRMTF.

This sequence belongs to the RNA methyltransferase RlmH family. In terms of assembly, homodimer.

It is found in the cytoplasm. The enzyme catalyses pseudouridine(1915) in 23S rRNA + S-adenosyl-L-methionine = N(3)-methylpseudouridine(1915) in 23S rRNA + S-adenosyl-L-homocysteine + H(+). Functionally, specifically methylates the pseudouridine at position 1915 (m3Psi1915) in 23S rRNA. The protein is Ribosomal RNA large subunit methyltransferase H of Methylocella silvestris (strain DSM 15510 / CIP 108128 / LMG 27833 / NCIMB 13906 / BL2).